The sequence spans 87 residues: MSTRSRARKRSRVRSRTRRKDPIFVDGHRPRPMYVDYKDLELLSKMVNRQGRIMGRRKSGCTAASQHAVTAAIKRARFMALLPYVGE.

Basic residues predominate over residues 1 to 19; the sequence is MSTRSRARKRSRVRSRTRR. The tract at residues 1–25 is disordered; the sequence is MSTRSRARKRSRVRSRTRRKDPIFV.

It belongs to the bacterial ribosomal protein bS18 family. In terms of assembly, part of the 30S ribosomal subunit. Forms a tight heterodimer with protein bS6.

Functionally, binds as a heterodimer with protein bS6 to the central domain of the 16S rRNA, where it helps stabilize the platform of the 30S subunit. The protein is Small ribosomal subunit protein bS18 of Rhodopirellula baltica (strain DSM 10527 / NCIMB 13988 / SH1).